We begin with the raw amino-acid sequence, 943 residues long: Translation initiation factor IF-2 (943 aa).

The disordered stretch occupies residues 29–349 (LSVKSHSSSV…NNRGNSAPKL (321 aa)). Composition is skewed to basic and acidic residues over residues 69-82 (PKEEKVEPKVDKAS), 112-137 (FKAEREARAKAEAERRKNGGGRDNRN), 145-155 (QGKRHNNDRRN), 163-196 (DHNKGNRDNSTNHDRNFQGKLRNDQNQNNRRDNA), and 224-253 (RQSETRFREEKAAEQRRAKEQEKARKEKQQ). A compositionally biased stretch (low complexity) spans 254–266 (AEVAVQKAAAETK). Residues 296 to 309 (KSRDNHRVNEDGPK) show a composition bias toward basic and acidic residues. The span at 313-332 (NNKWNNQNQVRNQRNSNWNK) shows a compositional bias: low complexity. Residues 445 to 614 (ERAPVVTIMG…LLVAEVEELK (170 aa)) form the tr-type G domain. A G1 region spans residues 454 to 461 (GHVDHGKT). 454–461 (GHVDHGKT) is a GTP binding site. The interval 479-483 (GITQH) is G2. Positions 500 to 503 (DTPG) are G3. Residues 500-504 (DTPGH) and 554-557 (NKID) each bind GTP. A G4 region spans residues 554–557 (NKID). The interval 590-592 (SAK) is G5.

Belongs to the TRAFAC class translation factor GTPase superfamily. Classic translation factor GTPase family. IF-2 subfamily.

The protein localises to the cytoplasm. In terms of biological role, one of the essential components for the initiation of protein synthesis. Protects formylmethionyl-tRNA from spontaneous hydrolysis and promotes its binding to the 30S ribosomal subunits. Also involved in the hydrolysis of GTP during the formation of the 70S ribosomal complex. The polypeptide is Translation initiation factor IF-2 (Streptococcus thermophilus (strain ATCC BAA-491 / LMD-9)).